The primary structure comprises 281 residues: Pantothenate synthetase (281 aa).

30–37 serves as a coordination point for ATP; that stretch reads MGYLHEGH. Residue His-37 is the Proton donor of the active site. (R)-pantoate is bound at residue Gln-61. Beta-alanine is bound at residue Gln-61. 147–150 contributes to the ATP binding site; it reads GQKD. Gln-153 provides a ligand contact to (R)-pantoate. ATP-binding positions include Val-176 and 184–187; that span reads MSSR.

This sequence belongs to the pantothenate synthetase family. As to quaternary structure, homodimer.

Its subcellular location is the cytoplasm. The enzyme catalyses (R)-pantoate + beta-alanine + ATP = (R)-pantothenate + AMP + diphosphate + H(+). It functions in the pathway cofactor biosynthesis; (R)-pantothenate biosynthesis; (R)-pantothenate from (R)-pantoate and beta-alanine: step 1/1. In terms of biological role, catalyzes the condensation of pantoate with beta-alanine in an ATP-dependent reaction via a pantoyl-adenylate intermediate. The chain is Pantothenate synthetase from Caldicellulosiruptor saccharolyticus (strain ATCC 43494 / DSM 8903 / Tp8T 6331).